The chain runs to 761 residues: Probable ATP-dependent RNA helicase DDX20 (761 aa).

A Q motif motif is present at residues 26–54; it reads VEFSSLLLSKPVLEGLSASGFQRPSPIQL. ATP-binding positions include R48, Q53, 70 to 77, and 73 to 78; these read AKSGTGKT and GTGKTC. Residues 57–231 form the Helicase ATP-binding domain; sequence IPLGRCGLDL…SRYMREPTFV (175 aa). Residues 175 to 178 carry the DEAD box motif; that stretch reads DEAD. A Helicase C-terminal domain is found at 266–415; that stretch reads SLLELFSKIP…PIPPGIMEEA (150 aa). Disordered stretches follow at residues 428–525 and 570–720; these read PKIP…KSHT and HDAH…EAGQ. A compositionally biased stretch (basic and acidic residues) spans 443-456; sequence KSEQMKSKPSRESH. Over residues 498-512 the composition is skewed to polar residues; sequence QHDSTITQKQQNNTL. 2 stretches are compositionally biased toward low complexity: residues 600–613 and 623–635; these read SELSSEQKTSSESS and ESSSSVPSKSTLE. The span at 655–679 shows a compositional bias: polar residues; sequence TLPSTRVPQQATRSKQKPCQPQSQD. A compositionally biased stretch (basic residues) spans 683–707; it reads HHNLPHKHRTASKSSRRPTGPKRRT.

This sequence belongs to the DEAD box helicase family. DDX20 subfamily. In terms of assembly, part of the core SMN complex.

It is found in the cytoplasm. The protein resides in the nucleus. It catalyses the reaction ATP + H2O = ADP + phosphate + H(+). It carries out the reaction a ribonucleoside 5'-triphosphate + H2O = a ribonucleoside 5'-diphosphate + phosphate + H(+). Functionally, the SMN complex catalyzes the assembly of small nuclear ribonucleoproteins (snRNPs), the building blocks of the spliceosome, and thereby plays an important role in the splicing of cellular pre-mRNAs. Most spliceosomal snRNPs contain a common set of Sm proteins SNRPB, SNRPD1, SNRPD2, SNRPD3, SNRPE, SNRPF and SNRPG that assemble in a heptameric protein ring on the Sm site of the small nuclear RNA to form the core snRNP (Sm core). In the cytosol, the Sm proteins SNRPD1, SNRPD2, SNRPE, SNRPF and SNRPG are trapped in an inactive 6S pICln-Sm complex by the chaperone CLNS1A that controls the assembly of the core snRNP. To assemble core snRNPs, the SMN complex accepts the trapped 5Sm proteins from CLNS1A forming an intermediate. Binding of snRNA inside 5Sm triggers eviction of the SMN complex, thereby allowing binding of SNRPD3 and SNRPB to complete assembly of the core snRNP. May also play a role in the metabolism of small nucleolar ribonucleoprotein (snoRNPs). The protein is Probable ATP-dependent RNA helicase DDX20 (ddx20) of Danio rerio (Zebrafish).